The following is a 335-amino-acid chain: Trans-3-hydroxy-L-proline dehydratase (335 aa).

Cysteine 91 serves as the catalytic Proton acceptor. Residues 92–93 (GH) and 256–257 (GS) contribute to the substrate site.

Belongs to the proline racemase family. In terms of assembly, homodimer.

The catalysed reaction is trans-3-hydroxy-L-proline = 1-pyrroline-2-carboxylate + H2O. The protein operates within amino-acid degradation. In terms of biological role, catalyzes the dehydration of trans-3-hydroxy-L-proline (t3LHyp) to Delta(1)-pyrroline-2-carboxylate (Pyr2C). Together with LhpI, is involved in a t3LHyp degradation pathway to L-proline, which allows A.brasilense to grow on t3LHyp as a sole carbon source. This is Trans-3-hydroxy-L-proline dehydratase from Azospirillum brasilense.